The chain runs to 316 residues: HTH-type transcriptional regulator cbl (316 aa).

The 59-residue stretch at 1 to 59 (MNFQQLKIIREAARQDYNLTEVANMLYTSQSGVSRHIRELEEELGIEIFIRRGKRLLGM) folds into the HTH lysR-type domain. A DNA-binding region (H-T-H motif) is located at residues 19 to 38 (LTEVANMLYTSQSGVSRHIR).

Belongs to the LysR transcriptional regulatory family.

Its function is as follows. May be an accessory regulatory protein within the cys regulon. In Klebsiella aerogenes (Enterobacter aerogenes), this protein is HTH-type transcriptional regulator cbl (cbl).